The chain runs to 444 residues: Inward rectifier potassium channel 4 (444 aa).

The Cytoplasmic portion of the chain corresponds to 1 to 55 (MHGHNRNGQAHVPRRKRRNRFVKKNGQCNVYFANLSNKSQRYMADIFTTCVDTRW). The chain crosses the membrane as a helical span at residues 56–80 (RYMLMLFSAAFLVSWLFFGLLFWCI). Topologically, residues 81–119 (AFFHGDLEASPSVPAAGAPGGNGGAAPAAPKPCIMHVNG) are extracellular. The segment at residues 120-131 (FLGAFLFSVETQ) is an intramembrane region (helical; Pore-forming). Positions 132 to 138 (TTIGYGF) form an intramembrane region, pore-forming. The Selectivity filter signature appears at 133–138 (TIGYGF). Topologically, residues 139-147 (RCVTEECPL) are extracellular. Residues 148 to 169 (AVIAVVVQSIVGCVIDSFMIGT) traverse the membrane as a helical segment. Residues 170 to 444 (IMAKMARPKK…NISYRRESAI (275 aa)) are Cytoplasmic-facing. The PDZ-binding signature appears at 442–444 (SAI).

Belongs to the inward rectifier-type potassium channel (TC 1.A.2.1) family. KCNJ4 subfamily. In terms of assembly, homomultimeric and heteromultimeric association with KCNJ2 and KCNJ12. Interacts with DLG2 and DLG4. Associates, via its PDZ-recognition domain, with a complex containing LIN7A, LIN7B, LIN7C, DLG1, CASK and APBA1. Interacts with TAX1BP3. TAX1BP3 competes with LIN7 family members for KCNJ4 binding.

The protein localises to the cell membrane. It localises to the postsynaptic cell membrane. It is found in the cytoplasmic vesicle membrane. The enzyme catalyses K(+)(in) = K(+)(out). Inward rectifier potassium channels are characterized by a greater tendency to allow potassium to flow into the cell rather than out of it. Their voltage dependence is regulated by the concentration of extracellular potassium; as external potassium is raised, the voltage range of the channel opening shifts to more positive voltages. The inward rectification is mainly due to the blockage of outward current by internal magnesium. Can be blocked by extracellular barium and cesium. The polypeptide is Inward rectifier potassium channel 4 (KCNJ4) (Mesocricetus auratus (Golden hamster)).